A 292-amino-acid chain; its full sequence is Pantothenate synthetase (292 aa).

30-37 (MGALHEGH) lines the ATP pocket. Residue His37 is the Proton donor of the active site. Gln61 lines the (R)-pantoate pocket. Gln61 contacts beta-alanine. 147–150 (GEKD) contributes to the ATP binding site. Gln153 is a (R)-pantoate binding site. 184 to 187 (VSSR) lines the ATP pocket.

Belongs to the pantothenate synthetase family. As to quaternary structure, homodimer.

The protein resides in the cytoplasm. The catalysed reaction is (R)-pantoate + beta-alanine + ATP = (R)-pantothenate + AMP + diphosphate + H(+). It functions in the pathway cofactor biosynthesis; (R)-pantothenate biosynthesis; (R)-pantothenate from (R)-pantoate and beta-alanine: step 1/1. Functionally, catalyzes the condensation of pantoate with beta-alanine in an ATP-dependent reaction via a pantoyl-adenylate intermediate. This is Pantothenate synthetase from Chlorobium phaeovibrioides (strain DSM 265 / 1930) (Prosthecochloris vibrioformis (strain DSM 265)).